The chain runs to 387 residues: Enoyl-[acyl-carrier-protein] reductase 2, mitochondrial (387 aa).

Residues 1–23 (MYRNQLARASLRSTSSINQIRNM) constitute a mitochondrion transit peptide. The active-site Proton donor is the Y79. NADP(+)-binding positions include N172, 199 to 202 (NSAV), 222 to 224 (RDR), 297 to 300 (YGGM), 322 to 324 (FWV), and K382.

It belongs to the zinc-containing alcohol dehydrogenase family. Quinone oxidoreductase subfamily. In terms of assembly, homodimer.

It localises to the mitochondrion matrix. It catalyses the reaction a 2,3-saturated acyl-[ACP] + NADP(+) = a (2E)-enoyl-[ACP] + NADPH + H(+). Catalyzes the NADPH-dependent reduction of trans-2-enoyl thioesters in mitochondrial fatty acid synthesis (fatty acid synthesis type II). Fatty acid chain elongation in mitochondria uses acyl carrier protein (ACP) as an acyl group carrier, but the enzyme accepts both ACP and CoA thioesters as substrates in vitro. Required for respiration and the maintenance of the mitochondrial compartment. The polypeptide is Enoyl-[acyl-carrier-protein] reductase 2, mitochondrial (ETR2) (Debaryomyces hansenii (strain ATCC 36239 / CBS 767 / BCRC 21394 / JCM 1990 / NBRC 0083 / IGC 2968) (Yeast)).